The sequence spans 116 residues: DNA-binding protein Tpen_0471 (116 aa).

Belongs to the PDCD5 family.

The protein is DNA-binding protein Tpen_0471 of Thermofilum pendens (strain DSM 2475 / Hrk 5).